A 195-amino-acid polypeptide reads, in one-letter code: Thymidine kinase (195 aa).

ATP is bound by residues 9-16 (ATMNAGKS) and 89-92 (DEAQ). The Proton acceptor role is filled by E90. Zn(2+)-binding residues include C147, C149, C184, and H187.

It belongs to the thymidine kinase family. In terms of assembly, homotetramer.

The protein resides in the cytoplasm. The catalysed reaction is thymidine + ATP = dTMP + ADP + H(+). The protein is Thymidine kinase of Rhizobium meliloti (strain 1021) (Ensifer meliloti).